The following is a 129-amino-acid chain: M-zodatoxin-Lt8b (129 aa).

A signal peptide spans 1-20 (MKYFVVALALVAAFACIAES). A propeptide spanning residues 21 to 60 (KPAESEHELAEVEEENELADLEDAVWLEHLADLSDLEEAR) is cleaved from the precursor. Positions 57-60 (EEAR) match the Processing quadruplet motif motif.

In terms of processing, cleavage of the propeptide depends on the processing quadruplet motif (XXXR, with at least one of X being E). Expressed by the venom gland.

It localises to the secreted. Functionally, insecticidal, cytolytic and antimicrobial peptide. Forms voltage-dependent, ion-permeable channels in membranes. At high concentration causes cell membrane lysis. The sequence is that of M-zodatoxin-Lt8b (cit 1-2) from Lachesana tarabaevi (Spider).